The following is a 495-amino-acid chain: AAA-ATPase At2g18193 (495 aa).

A helical transmembrane segment spans residues 7-28 (FSFSPSSLFSAYASLTGFLMLF). Residue 250-257 (GPPGTGKS) participates in ATP binding. Residues 451-495 (EVSICKATDDDEKQNGSLGCVKKKKKGGKQKGKGKGKGKAKTYLI) form a disordered region. The segment covering 471–495 (VKKKKKGGKQKGKGKGKGKAKTYLI) has biased composition (basic residues).

Belongs to the AAA ATPase family. BCS1 subfamily. Requires Mg(2+) as cofactor.

It is found in the membrane. It catalyses the reaction ATP + H2O = ADP + phosphate + H(+). This chain is AAA-ATPase At2g18193, found in Arabidopsis thaliana (Mouse-ear cress).